Reading from the N-terminus, the 550-residue chain is Homeobox and leucine zipper protein Homez (550 aa).

The span at 1 to 10 (MVRGWEPPPG) shows a compositional bias: pro residues. The interval 1–36 (MVRGWEPPPGLDCAISEGHKSEGTMPPNKEASGLSS) is disordered. Positions 55–114 (WTQAAQTSELDSNEHLLKTFSYFPYPSLADIALLCLRYGLQMEKVKTWFMAQRLRCGISW) form a DNA-binding region, homeobox 1. Positions 168–199 (GPPTLSKPTQTKGLKVEPEEPSQMPPLPQSHQ) are disordered. Residues Lys182, Lys200, and Lys202 each participate in a glycyl lysine isopeptide (Lys-Gly) (interchain with G-Cter in SUMO2) cross-link. The interval 223–265 (LQSSGLSKEQAGRGPNQSHGIGTASWNHSTTVPQPQARDKPPP) is disordered. A compositionally biased stretch (polar residues) spans 237–256 (PNQSHGIGTASWNHSTTVPQ). The residue at position 351 (Ser351) is a Phosphoserine. DNA-binding regions (homeobox) lie at residues 355 to 415 (QRQR…KHGQ) and 451 to 510 (TPPL…AEVV). The short motif at 358–363 (RKTKRK) is the Nuclear localization signal element. 2 disordered regions span residues 424-465 (VPGA…DIQP) and 512-550 (CLDEEEEEEEEELPEDDEEEEEEEEEDDDDDDDDVIIQD). Phosphothreonine is present on Thr451. Pro residues predominate over residues 452–463 (PPLPIPPPPPDI). Residues 513-550 (LDEEEEEEEEELPEDDEEEEEEEEEDDDDDDDDVIIQD) are compositionally biased toward acidic residues.

As to quaternary structure, homodimer or heterodimer (Potential). Interacts with HOXC8. As to expression, ubiquitous. Strongly expressed in adult testis and kidney as well as fetal lung and kidney.

It localises to the nucleus. May function as a transcriptional regulator. This is Homeobox and leucine zipper protein Homez (HOMEZ) from Homo sapiens (Human).